The sequence spans 556 residues: Valencene synthase (556 aa).

The span at 1 to 12 shows a compositional bias: polar residues; that stretch reads MSTQVSASSLAQ. Residues 1 to 24 are disordered; sequence MSTQVSASSLAQIPQPKNRPVANF. Aspartate 310, aspartate 314, and glutamate 462 together coordinate Mg(2+). The short motif at 310–314 is the DDXXD motif element; sequence DDIHD.

This sequence belongs to the terpene synthase family. Tpsa subfamily. It depends on Mg(2+) as a cofactor. In terms of tissue distribution, expressed in flowers and anthers. Detected inside the pollen grains, but not in stems, leaves, tendrils, roots, seeds, pistils or caps.

Its subcellular location is the cytoplasm. It catalyses the reaction (2E,6E)-farnesyl diphosphate = (+)-valencene + diphosphate. It carries out the reaction (2E,6E)-farnesyl diphosphate = (-)-7-epi-alpha-selinene + diphosphate. Its pathway is secondary metabolite biosynthesis; terpenoid biosynthesis. Its function is as follows. Involved in the biosynthesis of valencene, a major volatile emitted from flowers of grapevine. Can use farnesyl diphosphate as substrate, but not geranyl diphosphate or geranylgeranyl diphosphate. Produces mainly (+)-valencene and (-)-7-epi-alpha-selinene along with five minor products. In Vitis vinifera (Grape), this protein is Valencene synthase (ValCS).